The following is a 380-amino-acid chain: Mitogen-activated protein kinase mpkC (380 aa).

One can recognise a Protein kinase domain in the interval 20–300 (YVNLQPIGMG…AQDALRHPYL (281 aa)). ATP contacts are provided by residues 26 to 34 (IGMGSFGLV) and K49. The active-site Proton acceptor is the D141. Position 171 is a phosphothreonine (T171). Residues 171 to 173 (TGY) carry the TXY motif. Y173 is subject to Phosphotyrosine.

The protein belongs to the protein kinase superfamily. Ser/Thr protein kinase family. MAP kinase subfamily. HOG1 sub-subfamily. The cofactor is Mg(2+). In terms of processing, dually phosphorylated on Thr-171 and Tyr-173, which activates the enzyme.

The catalysed reaction is L-seryl-[protein] + ATP = O-phospho-L-seryl-[protein] + ADP + H(+). The enzyme catalyses L-threonyl-[protein] + ATP = O-phospho-L-threonyl-[protein] + ADP + H(+). With respect to regulation, activated by tyrosine and threonine phosphorylation. Functionally, mitogen-activated protein kinase required for growth on media where sorbitol or mannitol is the sole carbon source. This is Mitogen-activated protein kinase mpkC (mpkC) from Aspergillus clavatus (strain ATCC 1007 / CBS 513.65 / DSM 816 / NCTC 3887 / NRRL 1 / QM 1276 / 107).